A 339-amino-acid polypeptide reads, in one-letter code: Ketol-acid reductoisomerase (NADP(+)) (339 aa).

The region spanning 1–182 (MRVYYDRDAD…GGGRSGIIET (182 aa)) is the KARI N-terminal Rossmann domain. NADP(+)-binding positions include 24–27 (YGSQ), R48, S51, S53, and 83–86 (DELQ). Residue H108 is part of the active site. An NADP(+)-binding site is contributed by G134. The KARI C-terminal knotted domain maps to 183 to 328 (TFREECETDL…EKLRGMMPWI (146 aa)). Mg(2+) contacts are provided by D191, E195, E227, and E231. Residue S252 participates in substrate binding.

This sequence belongs to the ketol-acid reductoisomerase family. It depends on Mg(2+) as a cofactor.

It carries out the reaction (2R)-2,3-dihydroxy-3-methylbutanoate + NADP(+) = (2S)-2-acetolactate + NADPH + H(+). The enzyme catalyses (2R,3R)-2,3-dihydroxy-3-methylpentanoate + NADP(+) = (S)-2-ethyl-2-hydroxy-3-oxobutanoate + NADPH + H(+). It functions in the pathway amino-acid biosynthesis; L-isoleucine biosynthesis; L-isoleucine from 2-oxobutanoate: step 2/4. It participates in amino-acid biosynthesis; L-valine biosynthesis; L-valine from pyruvate: step 2/4. Involved in the biosynthesis of branched-chain amino acids (BCAA). Catalyzes an alkyl-migration followed by a ketol-acid reduction of (S)-2-acetolactate (S2AL) to yield (R)-2,3-dihydroxy-isovalerate. In the isomerase reaction, S2AL is rearranged via a Mg-dependent methyl migration to produce 3-hydroxy-3-methyl-2-ketobutyrate (HMKB). In the reductase reaction, this 2-ketoacid undergoes a metal-dependent reduction by NADPH to yield (R)-2,3-dihydroxy-isovalerate. This Magnetospirillum molischianum (Rhodospirillum molischianum) protein is Ketol-acid reductoisomerase (NADP(+)).